Consider the following 373-residue polypeptide: Indole glucosinolate O-methyltransferase 4 (373 aa).

S-adenosyl-L-homocysteine-binding residues include Gly-217, Asp-240, Asp-260, Met-261, and Lys-274. His-278 functions as the Proton acceptor in the catalytic mechanism.

Belongs to the class I-like SAM-binding methyltransferase superfamily. Cation-independent O-methyltransferase family. As to quaternary structure, interacts with B'GAMMA.

Its pathway is secondary metabolite biosynthesis. Its function is as follows. Involved in indole glucosinolate biosynthesis. Catalyzes methoxylation reactions of the glucosinolate indole ring. Converts the hydroxy intermediates 4-hydroxy-indol-3-yl-methylglucosinolate (4OH-I3M) and 1-hydroxy-indol-3-yl-methylglucosinolate (1OH-I3M) to 4-methoxy-indol-3-yl-methylglucosinolate (4MO-I3M) and 1-methoxy-indol-3-yl-methylglucosinolate(1MO-I3M), respectively. The protein is Indole glucosinolate O-methyltransferase 4 of Arabidopsis thaliana (Mouse-ear cress).